A 282-amino-acid chain; its full sequence is Glutamate--LysW ligase ArgX (282 aa).

ATP is bound by residues Lys-87, Lys-127, 131–137 (GSWGRLV), and 167–178 (QEYIQYKGRDIR). The ATP-grasp domain maps to 91–277 (YSKLYREGIP…VAQKLVEYIK (187 aa)). Arg-192 provides a ligand contact to substrate. Asn-202 lines the ATP pocket. 203–204 (VA) serves as a coordination point for substrate. Mg(2+) contacts are provided by Asp-237, Glu-250, and Asn-252. Residue 256–260 (EFKGF) participates in substrate binding. Positions 259–260 (GF) match the GF motif that is essential for ArgX substrate specificity motif.

It belongs to the RimK family. LysX subfamily. In terms of assembly, homotetramer. Interacts with LysW. Requires Mg(2+) as cofactor.

It carries out the reaction [amino-group carrier protein]-C-terminal-L-glutamate + L-glutamate + ATP = [amino-group carrier protein]-C-terminal-gamma-(L-glutamyl)-L-glutamate + ADP + phosphate + H(+). It participates in amino-acid biosynthesis; L-arginine biosynthesis. Functionally, catalyzes the ATP-dependent formation of a covalent bond between the amino group of glutamate and the gamma-carboxyl group of the C-terminal glutamate residue in LysW. This chain is Glutamate--LysW ligase ArgX, found in Sulfurisphaera tokodaii (strain DSM 16993 / JCM 10545 / NBRC 100140 / 7) (Sulfolobus tokodaii).